Here is a 129-residue protein sequence, read N- to C-terminus: Fluoride-specific ion channel FluC 2 (129 aa).

4 consecutive transmembrane segments (helical) span residues 9-29 (LGTL…RYLL), 37-57 (GTIL…YYVI), 74-94 (MVGA…LSTF), and 100-120 (YLLI…ILGI). Residues G76 and T79 each coordinate Na(+).

It belongs to the fluoride channel Fluc/FEX (TC 1.A.43) family.

It is found in the cell membrane. It catalyses the reaction fluoride(in) = fluoride(out). Na(+) is not transported, but it plays an essential structural role and its presence is essential for fluoride channel function. Functionally, fluoride-specific ion channel. Important for reducing fluoride concentration in the cell, thus reducing its toxicity. This is Fluoride-specific ion channel FluC 2 from Ligilactobacillus salivarius (strain UCC118) (Lactobacillus salivarius).